A 570-amino-acid polypeptide reads, in one-letter code: MSQQDSPANADHRRRHSSIVVDGPGKAASRAMLRAVGFTDEDFKKPQVGIASTWSRVTPCNSHINVLADAASDGADAAGGKGVVFNTITISDGIANGTEGMKYSMASREIIADSIEAVSGCEGFDGVVAIGGCDKNMPGCMIGLARLNRPSIFVYGGTIQPGAGHTDLVSVFEAMGAYSQGNKSLIEVKQIEEVAIPGPGSCGGMYTANTMASAIEAMGMSLPNSSAQDAVSQSKKDDSRAAGEAVLKLLELDIKPSDIMTRKAFENAITVVIALGGSTNAVLHLIAMANTIGVELSLDDFTEIGKRVPVLADLRPSGHYLMSELVAIGGIQPMMKILLDAGLLHGDCLTVTGKTLAENLADVTPYPTGQEIIKPLEAPIKSSSHLRILYGNLAPEGAVAKITGKEGTRFTGRARVFNSEEEAQARINDLTVAAGDVVVIRYEGPKGGPGMREMLTPTSAIMGRGLGDKVALITDGRFSGGSHGFVVGHITPEAFVGGPIGLVEDGDEITIDAENDIMTLHIDDAEMARRRAAWKRPAPRYTRGTLAKYAKTVSSASKGAVTDLPEALDD.

The segment at 1–25 is disordered; it reads MSQQDSPANADHRRRHSSIVVDGPG. Cys-60 is a [2Fe-2S] cluster binding site. Asp-92 serves as a coordination point for Mg(2+). A [2Fe-2S] cluster-binding site is contributed by Cys-133. Mg(2+)-binding residues include Asp-134 and Lys-135. Position 135 is an N6-carboxylysine (Lys-135). A [2Fe-2S] cluster-binding site is contributed by Cys-202. Residue Glu-453 participates in Mg(2+) binding. The active-site Proton acceptor is Ser-479.

Belongs to the IlvD/Edd family. As to quaternary structure, homodimer. Requires [2Fe-2S] cluster as cofactor. It depends on Mg(2+) as a cofactor.

The enzyme catalyses (2R)-2,3-dihydroxy-3-methylbutanoate = 3-methyl-2-oxobutanoate + H2O. It carries out the reaction (2R,3R)-2,3-dihydroxy-3-methylpentanoate = (S)-3-methyl-2-oxopentanoate + H2O. It functions in the pathway amino-acid biosynthesis; L-isoleucine biosynthesis; L-isoleucine from 2-oxobutanoate: step 3/4. It participates in amino-acid biosynthesis; L-valine biosynthesis; L-valine from pyruvate: step 3/4. Functionally, functions in the biosynthesis of branched-chain amino acids. Catalyzes the dehydration of (2R,3R)-2,3-dihydroxy-3-methylpentanoate (2,3-dihydroxy-3-methylvalerate) into 2-oxo-3-methylpentanoate (2-oxo-3-methylvalerate) and of (2R)-2,3-dihydroxy-3-methylbutanoate (2,3-dihydroxyisovalerate) into 2-oxo-3-methylbutanoate (2-oxoisovalerate), the penultimate precursor to L-isoleucine and L-valine, respectively. The polypeptide is Dihydroxy-acid dehydratase (Chromohalobacter salexigens (strain ATCC BAA-138 / DSM 3043 / CIP 106854 / NCIMB 13768 / 1H11)).